The following is a 329-amino-acid chain: Methionyl-tRNA formyltransferase (329 aa).

Position 117–120 (117–120) interacts with (6S)-5,6,7,8-tetrahydrofolate; it reads SLLP.

It belongs to the Fmt family.

It carries out the reaction L-methionyl-tRNA(fMet) + (6R)-10-formyltetrahydrofolate = N-formyl-L-methionyl-tRNA(fMet) + (6S)-5,6,7,8-tetrahydrofolate + H(+). Functionally, attaches a formyl group to the free amino group of methionyl-tRNA(fMet). The formyl group appears to play a dual role in the initiator identity of N-formylmethionyl-tRNA by promoting its recognition by IF2 and preventing the misappropriation of this tRNA by the elongation apparatus. This is Methionyl-tRNA formyltransferase from Paracidovorax citrulli (strain AAC00-1) (Acidovorax citrulli).